A 426-amino-acid chain; its full sequence is Histidine--tRNA ligase (426 aa).

This sequence belongs to the class-II aminoacyl-tRNA synthetase family. As to quaternary structure, homodimer.

The protein localises to the cytoplasm. The catalysed reaction is tRNA(His) + L-histidine + ATP = L-histidyl-tRNA(His) + AMP + diphosphate + H(+). The sequence is that of Histidine--tRNA ligase from Colwellia psychrerythraea (strain 34H / ATCC BAA-681) (Vibrio psychroerythus).